The following is a 185-amino-acid chain: Orotate phosphoribosyltransferase (185 aa).

5-phospho-alpha-D-ribose 1-diphosphate is bound by residues Arg-94, Lys-95, Lys-98, His-100, and 120–128 (EDVTTTGGS). Thr-124 and Arg-152 together coordinate orotate.

This sequence belongs to the purine/pyrimidine phosphoribosyltransferase family. PyrE subfamily. Homodimer. It depends on Mg(2+) as a cofactor.

The enzyme catalyses orotidine 5'-phosphate + diphosphate = orotate + 5-phospho-alpha-D-ribose 1-diphosphate. It functions in the pathway pyrimidine metabolism; UMP biosynthesis via de novo pathway; UMP from orotate: step 1/2. Its function is as follows. Catalyzes the transfer of a ribosyl phosphate group from 5-phosphoribose 1-diphosphate to orotate, leading to the formation of orotidine monophosphate (OMP). The sequence is that of Orotate phosphoribosyltransferase from Thermococcus kodakarensis (strain ATCC BAA-918 / JCM 12380 / KOD1) (Pyrococcus kodakaraensis (strain KOD1)).